The chain runs to 295 residues: Cyclin-G1 (295 aa).

It belongs to the cyclin family. Cyclin G subfamily.

The protein resides in the nucleus. Its function is as follows. May play a role in growth regulation. Is associated with G2/M phase arrest in response to DNA damage. May be an intermediate by which p53 mediates its role as an inhibitor of cellular proliferation. The protein is Cyclin-G1 (CCNG1) of Bos taurus (Bovine).